We begin with the raw amino-acid sequence, 445 residues long: Tubulin beta-5 chain (445 aa).

GTP contacts are provided by Gln-11, Glu-69, Ser-138, Gly-142, Thr-143, Gly-144, Asn-204, and Asn-226. Glu-69 lines the Mg(2+) pocket. The segment at 420 to 445 (AEYQQYQDATADDEYEEGEEEEEEAA) is disordered. Positions 429–445 (TADDEYEEGEEEEEEAA) are enriched in acidic residues.

This sequence belongs to the tubulin family. As to quaternary structure, dimer of alpha and beta chains. A typical microtubule is a hollow water-filled tube with an outer diameter of 25 nm and an inner diameter of 15 nM. Alpha-beta heterodimers associate head-to-tail to form protofilaments running lengthwise along the microtubule wall with the beta-tubulin subunit facing the microtubule plus end conferring a structural polarity. Microtubules usually have 13 protofilaments but different protofilament numbers can be found in some organisms and specialized cells. It depends on Mg(2+) as a cofactor.

Its subcellular location is the cytoplasm. It is found in the cytoskeleton. Tubulin is the major constituent of microtubules, a cylinder consisting of laterally associated linear protofilaments composed of alpha- and beta-tubulin heterodimers. Microtubules grow by the addition of GTP-tubulin dimers to the microtubule end, where a stabilizing cap forms. Below the cap, tubulin dimers are in GDP-bound state, owing to GTPase activity of alpha-tubulin. The polypeptide is Tubulin beta-5 chain (Gossypium hirsutum (Upland cotton)).